The primary structure comprises 54 residues: Ovomucoid (54 aa).

Positions 4-54 (VDCSDYPRPDCTLEYMPLCGSDNKTYGNKCNFCNAVVDSNGTLTLSHFGKC) constitute a Kazal-like domain. Disulfide bonds link C6/C36, C14/C33, and C22/C54. A glycan (N-linked (GlcNAc...) asparagine) is linked at N43.

The protein resides in the secreted. The polypeptide is Ovomucoid (Dendrocygna eytoni (Plumed whistling-duck)).